Consider the following 350-residue polypeptide: Nicotinate-nucleotide--dimethylbenzimidazole phosphoribosyltransferase (350 aa).

E317 acts as the Proton acceptor in catalysis.

Belongs to the CobT family.

It carries out the reaction 5,6-dimethylbenzimidazole + nicotinate beta-D-ribonucleotide = alpha-ribazole 5'-phosphate + nicotinate + H(+). Its pathway is nucleoside biosynthesis; alpha-ribazole biosynthesis; alpha-ribazole from 5,6-dimethylbenzimidazole: step 1/2. Functionally, catalyzes the synthesis of alpha-ribazole-5'-phosphate from nicotinate mononucleotide (NAMN) and 5,6-dimethylbenzimidazole (DMB). The sequence is that of Nicotinate-nucleotide--dimethylbenzimidazole phosphoribosyltransferase from Shewanella sp. (strain MR-4).